A 125-amino-acid chain; its full sequence is Multifunctional methyltransferase subunit TRM112-like protein (125 aa).

Positions 2-119 (KLLTHNLLSS…SRGIPNMLLN (118 aa)) constitute a TRM112 domain.

Belongs to the TRM112 family. As to quaternary structure, part of the heterodimeric BUD23-TRM112 methyltransferase complex; this heterodimerization is necessary for the metabolic stability and activity of the catalytic subunit BUD23. Part of the heterodimeric N6AMT1-TRM112 methyltransferase complex; this heterodimerization is necessary for S-adenosyl-L-methionine-binding to N6AMT1/HEMK2. Part of the heterodimeric ALKBH8-TRM112 methyltransferase complex. Part of the heterodimeric METTL5-TRM112 methyltransferase complex; this heterodimerization is necessary for the stability of the catalytic subunit METTL5. Part of the heterodimeric THUMPD3-TRM112 methyltransferase complex; this complex forms an active tRNA methyltransferase, where TRMT112 acts as an activator of the catalytic subunit THUMPD3. Part of the heterodimeric THUMPD2-TRM112 methyltransferase complex; this complex forms an active tRNA methyltransferase, where TRMT112 acts as an activator of the catalytic subunit THUMPD2. Part of the heterodimeric TRMT11-TRM112 methyltransferase complex; this complex forms an active tRNA methyltransferase, where TRMT112 acts as an activator of the catalytic subunit TRMT11. In terms of tissue distribution, abundantly expressed in the testis, also expressed in the brain, heart, kidney, liver, lung, muscle and spleen.

It is found in the nucleus. Its subcellular location is the nucleoplasm. It localises to the cytoplasm. The protein resides in the perinuclear region. Its function is as follows. Acts as an activator of both rRNA/tRNA and protein methyltransferases. Together with methyltransferase BUD23, methylates the N(7) position of a guanine in 18S rRNA. The heterodimer with HEMK2/N6AMT1 catalyzes N5-methylation of ETF1 on 'Gln-185', using S-adenosyl L-methionine as methyl donor. The heterodimer with ALKBH8 catalyzes the methylation of 5-carboxymethyl uridine to 5-methylcarboxymethyl uridine at the wobble position of the anticodon loop in target tRNA species. Together with methyltransferase THUMPD3, catalyzes the formation of N(2)-methylguanosine at position 6 in a broad range of tRNA substrates and at position 7 of tRNA(Trp). Involved in the pre-rRNA processing steps leading to small-subunit rRNA production. Together with methyltransferase METTL5, specifically methylates the 6th position of adenine in position 1832 of 18S rRNA. In Mus musculus (Mouse), this protein is Multifunctional methyltransferase subunit TRM112-like protein (Trmt112).